A 464-amino-acid chain; its full sequence is UPF0210 protein MA_1691 (464 aa).

It belongs to the UPF0210 family.

The sequence is that of UPF0210 protein MA_1691 from Methanosarcina acetivorans (strain ATCC 35395 / DSM 2834 / JCM 12185 / C2A).